The primary structure comprises 179 residues: ATP synthase subunit delta (179 aa).

It belongs to the ATPase delta chain family. F-type ATPases have 2 components, F(1) - the catalytic core - and F(0) - the membrane proton channel. F(1) has five subunits: alpha(3), beta(3), gamma(1), delta(1), epsilon(1). F(0) has three main subunits: a(1), b(2) and c(10-14). The alpha and beta chains form an alternating ring which encloses part of the gamma chain. F(1) is attached to F(0) by a central stalk formed by the gamma and epsilon chains, while a peripheral stalk is formed by the delta and b chains.

The protein localises to the cell membrane. Functionally, f(1)F(0) ATP synthase produces ATP from ADP in the presence of a proton or sodium gradient. F-type ATPases consist of two structural domains, F(1) containing the extramembraneous catalytic core and F(0) containing the membrane proton channel, linked together by a central stalk and a peripheral stalk. During catalysis, ATP synthesis in the catalytic domain of F(1) is coupled via a rotary mechanism of the central stalk subunits to proton translocation. This protein is part of the stalk that links CF(0) to CF(1). It either transmits conformational changes from CF(0) to CF(1) or is implicated in proton conduction. The chain is ATP synthase subunit delta from Listeria monocytogenes serotype 4b (strain CLIP80459).